The primary structure comprises 92 residues: Small ribosomal subunit protein uS19 (92 aa).

It belongs to the universal ribosomal protein uS19 family.

Functionally, protein S19 forms a complex with S13 that binds strongly to the 16S ribosomal RNA. The protein is Small ribosomal subunit protein uS19 of Corynebacterium kroppenstedtii (strain DSM 44385 / JCM 11950 / CIP 105744 / CCUG 35717).